A 303-amino-acid polypeptide reads, in one-letter code: Probable 5-dehydro-4-deoxyglucarate dehydratase (303 aa).

This sequence belongs to the DapA family.

The enzyme catalyses 5-dehydro-4-deoxy-D-glucarate + H(+) = 2,5-dioxopentanoate + CO2 + H2O. It functions in the pathway carbohydrate acid metabolism; D-glucarate degradation; 2,5-dioxopentanoate from D-glucarate: step 2/2. The protein is Probable 5-dehydro-4-deoxyglucarate dehydratase of Delftia acidovorans (strain DSM 14801 / SPH-1).